A 235-amino-acid chain; its full sequence is Aspartate/glutamate leucyltransferase (235 aa).

This sequence belongs to the R-transferase family. Bpt subfamily.

It localises to the cytoplasm. It carries out the reaction N-terminal L-glutamyl-[protein] + L-leucyl-tRNA(Leu) = N-terminal L-leucyl-L-glutamyl-[protein] + tRNA(Leu) + H(+). The enzyme catalyses N-terminal L-aspartyl-[protein] + L-leucyl-tRNA(Leu) = N-terminal L-leucyl-L-aspartyl-[protein] + tRNA(Leu) + H(+). In terms of biological role, functions in the N-end rule pathway of protein degradation where it conjugates Leu from its aminoacyl-tRNA to the N-termini of proteins containing an N-terminal aspartate or glutamate. In Pseudomonas syringae pv. tomato (strain ATCC BAA-871 / DC3000), this protein is Aspartate/glutamate leucyltransferase.